Reading from the N-terminus, the 391-residue chain is mRNA-capping enzyme subunit alpha (391 aa).

Residue K63 is the N6-GMP-lysine intermediate of the active site. Positions 363–391 (KERNRRPRDEDRKRVGGDDHDHGAKRARQ) are disordered.

The protein belongs to the eukaryotic GTase family. In terms of assembly, heterodimer. The mRNA-capping enzyme is composed of two separate chains alpha and beta, respectively a mRNA guanylyltransferase and an mRNA 5'-triphosphate monophosphatase.

Its subcellular location is the nucleus. The enzyme catalyses a 5'-end diphospho-ribonucleoside in mRNA + GTP + H(+) = a 5'-end (5'-triphosphoguanosine)-ribonucleoside in mRNA + diphosphate. Functionally, second step of mRNA capping. Transfer of the GMP moiety of GTP to the 5'-end of RNA via an enzyme-GMP covalent reaction intermediate. This chain is mRNA-capping enzyme subunit alpha (CEG1), found in Yarrowia lipolytica (strain CLIB 122 / E 150) (Yeast).